Consider the following 558-residue polypeptide: Acylase ACY 1 proenzyme (558 aa).

Thr368 functions as the Nucleophile in the catalytic mechanism.

This sequence belongs to the gamma-glutamyltransferase family. Dimer of two non-identical chains processed from the same precursor.

The catalysed reaction is (7R)-7-(4-carboxybutanamido)cephalosporanate + H2O = (7R)-7-aminocephalosporanate + glutarate. It catalyses the reaction an N-terminal (5-L-glutamyl)-[peptide] + an alpha-amino acid = 5-L-glutamyl amino acid + an N-terminal L-alpha-aminoacyl-[peptide]. The enzyme catalyses glutathione + H2O = L-cysteinylglycine + L-glutamate. It carries out the reaction an S-substituted glutathione + H2O = an S-substituted L-cysteinylglycine + L-glutamate. In terms of biological role, besides the cephalosporin acylase I activity which converts GL-7ACA into 7-ACA; this enzyme displays some gamma glutamyltranspeptidase activity. This Pseudomonas sp. (strain SE83) protein is Acylase ACY 1 proenzyme (acyI).